The chain runs to 317 residues: Glycine--tRNA ligase alpha subunit (317 aa).

The protein belongs to the class-II aminoacyl-tRNA synthetase family. Tetramer of two alpha and two beta subunits.

Its subcellular location is the cytoplasm. It catalyses the reaction tRNA(Gly) + glycine + ATP = glycyl-tRNA(Gly) + AMP + diphosphate. The polypeptide is Glycine--tRNA ligase alpha subunit (Lactococcus lactis subsp. cremoris (strain SK11)).